Here is a 311-residue protein sequence, read N- to C-terminus: Ribosomal protein L11 methyltransferase (311 aa).

S-adenosyl-L-methionine contacts are provided by threonine 163, glycine 184, aspartate 206, and asparagine 248.

The protein belongs to the methyltransferase superfamily. PrmA family.

The protein resides in the cytoplasm. It catalyses the reaction L-lysyl-[protein] + 3 S-adenosyl-L-methionine = N(6),N(6),N(6)-trimethyl-L-lysyl-[protein] + 3 S-adenosyl-L-homocysteine + 3 H(+). In terms of biological role, methylates ribosomal protein L11. The protein is Ribosomal protein L11 methyltransferase of Clostridium acetobutylicum (strain ATCC 824 / DSM 792 / JCM 1419 / IAM 19013 / LMG 5710 / NBRC 13948 / NRRL B-527 / VKM B-1787 / 2291 / W).